Here is a 95-residue protein sequence, read N- to C-terminus: MLHTLHRSPWLTDFAALLRLLSEGDELLLLQDGVTAAVDGNRYLESLRNAPIKVYALNEDLIARGLTGRISNDIISIDYTDFVRLTVKHSSQMAW.

The protein belongs to the DsrH/TusB family. As to quaternary structure, heterohexamer, formed by a dimer of trimers. The hexameric TusBCD complex contains 2 copies each of TusB, TusC and TusD. The TusBCD complex interacts with TusE.

It localises to the cytoplasm. Part of a sulfur-relay system required for 2-thiolation of 5-methylaminomethyl-2-thiouridine (mnm(5)s(2)U) at tRNA wobble positions. In Escherichia coli O81 (strain ED1a), this protein is Protein TusB.